We begin with the raw amino-acid sequence, 126 residues long: Fluoride-specific ion channel FluC (126 aa).

4 helical membrane passes run 2 to 22 (LTFA…GAWL), 37 to 57 (WGTL…VALI), 65 to 85 (AWIR…FSTF), and 101 to 121 (AAAY…LATV). Residues Gly77 and Thr80 each contribute to the Na(+) site.

The protein belongs to the fluoride channel Fluc/FEX (TC 1.A.43) family.

The protein localises to the cell inner membrane. It catalyses the reaction fluoride(in) = fluoride(out). With respect to regulation, na(+) is not transported, but it plays an essential structural role and its presence is essential for fluoride channel function. Its function is as follows. Fluoride-specific ion channel. Important for reducing fluoride concentration in the cell, thus reducing its toxicity. The polypeptide is Fluoride-specific ion channel FluC (Bordetella parapertussis (strain 12822 / ATCC BAA-587 / NCTC 13253)).